Here is a 164-residue protein sequence, read N- to C-terminus: Transcription elongation factor GreA (164 aa).

Residues 50–76 (YHAAREEQGQQEARIRQLQELLNNAKV) are a coiled coil.

The protein belongs to the GreA/GreB family.

Functionally, necessary for efficient RNA polymerase transcription elongation past template-encoded arresting sites. The arresting sites in DNA have the property of trapping a certain fraction of elongating RNA polymerases that pass through, resulting in locked ternary complexes. Cleavage of the nascent transcript by cleavage factors such as GreA or GreB allows the resumption of elongation from the new 3'terminus. GreA releases sequences of 2 to 3 nucleotides. This Mycobacteroides abscessus (strain ATCC 19977 / DSM 44196 / CCUG 20993 / CIP 104536 / JCM 13569 / NCTC 13031 / TMC 1543 / L948) (Mycobacterium abscessus) protein is Transcription elongation factor GreA.